The following is a 462-amino-acid chain: 3beta-hydroxysteroid dehydrogenase/Delta(5)-Delta(4) isomerase 1 (462 aa).

NAD(+) is bound by residues 51-56 (GGAGHL), tyrosine 220, and lysine 224. The Proton donor role is filled by lysine 224. 2 helical membrane-spanning segments follow: residues 321-341 (VGTF…SSMI) and 428-448 (VAVL…FTFW).

Belongs to the 3-beta-HSD family. As to expression, expressed exclusively in the neuron-like XXX(L/R) cells through all four larval stages and becomes fainter in adults.

It is found in the membrane. The catalysed reaction is a 3beta-hydroxy-Delta(5)-steroid + NAD(+) = a 3-oxo-Delta(5)-steroid + NADH + H(+). It catalyses the reaction cholesterol + NAD(+) = cholest-5-en-3-one + NADH + H(+). The enzyme catalyses a 3-oxo-Delta(5)-steroid = a 3-oxo-Delta(4)-steroid. It carries out the reaction cholest-5-en-3-one = cholest-4-en-3-one. The protein operates within steroid hormone biosynthesis; dafachronic acid biosynthesis. In terms of biological role, hydroxysteroid dehydrogenase involved in the biosynthesis of dafrachonic acids. Catalyzes the dehydrogenation of cholesterol or its derivatives and the isomerization of the double carbon bond on the sterol ring. Modifies sterols into a Delta(4)-3-keto-sterols such as cholest-4-en-3-one, precursor of Delta(4)-dafachronic acid. Contributes to the production of Delta(7)-dafachronic acid in the XXX cells. Dafachronic acids act as ligands and bind directly to the nuclear hormone receptor (NHR) daf-12 suppressing dauer formation and inducing reproductive growth. Acts in parallel to AKT-1 to promote reproductive development via DAF-16/FoxO and DAF-12. In Caenorhabditis elegans, this protein is 3beta-hydroxysteroid dehydrogenase/Delta(5)-Delta(4) isomerase 1.